The following is a 360-amino-acid chain: Phospho-N-acetylmuramoyl-pentapeptide-transferase (360 aa).

A run of 10 helical transmembrane segments spans residues 26 to 46 (TILG…AVIQ), 70 to 90 (GTPT…TLLW), 97 to 117 (YVWV…VDDY), 132 to 152 (AKFF…FSTA), 168 to 188 (VVLP…VGSS), 199 to 219 (GLAI…AYAT), 236 to 256 (AGEV…FLWF), 263 to 283 (VFMG…LAVV), 288 to 308 (LVLL…MLQV), and 338 to 358 (VIVR…AMLK).

It belongs to the glycosyltransferase 4 family. MraY subfamily. Mg(2+) serves as cofactor.

The protein localises to the cell inner membrane. The catalysed reaction is UDP-N-acetyl-alpha-D-muramoyl-L-alanyl-gamma-D-glutamyl-meso-2,6-diaminopimeloyl-D-alanyl-D-alanine + di-trans,octa-cis-undecaprenyl phosphate = di-trans,octa-cis-undecaprenyl diphospho-N-acetyl-alpha-D-muramoyl-L-alanyl-D-glutamyl-meso-2,6-diaminopimeloyl-D-alanyl-D-alanine + UMP. It participates in cell wall biogenesis; peptidoglycan biosynthesis. In terms of biological role, catalyzes the initial step of the lipid cycle reactions in the biosynthesis of the cell wall peptidoglycan: transfers peptidoglycan precursor phospho-MurNAc-pentapeptide from UDP-MurNAc-pentapeptide onto the lipid carrier undecaprenyl phosphate, yielding undecaprenyl-pyrophosphoryl-MurNAc-pentapeptide, known as lipid I. The sequence is that of Phospho-N-acetylmuramoyl-pentapeptide-transferase from Alkalilimnicola ehrlichii (strain ATCC BAA-1101 / DSM 17681 / MLHE-1).